The sequence spans 234 residues: (5-formylfuran-3-yl)methyl phosphate synthase (234 aa).

Lys27 serves as the catalytic Schiff-base intermediate with substrate. Residue Lys85 is the Proton acceptor of the active site.

Belongs to the MfnB family.

It carries out the reaction 2 D-glyceraldehyde 3-phosphate = 4-(hydroxymethyl)-2-furancarboxaldehyde phosphate + phosphate + 2 H2O. The protein operates within cofactor biosynthesis; methanofuran biosynthesis. Catalyzes the formation of 4-(hydroxymethyl)-2-furancarboxaldehyde phosphate (4-HFC-P) from two molecules of glyceraldehyde-3-P (GA-3-P). In Methanosarcina mazei (strain ATCC BAA-159 / DSM 3647 / Goe1 / Go1 / JCM 11833 / OCM 88) (Methanosarcina frisia), this protein is (5-formylfuran-3-yl)methyl phosphate synthase.